A 459-amino-acid chain; its full sequence is MRASWVAARKGQANVSQLHFARQGVVTQEMDYVARRENLPESLVMEEVARGRMIIPANINHANLEPMAIGIASSCKVNANIGASPNASDVAEELKKLELAVKYGADTVMDLSTGGVNLDEVRTAIINASPVPIGTVPVYQALESVHGSIEKLDEDDFLHIIEKHCQQGVDYQTIHAGLLIEHLPLVKGRLTGIVSRGGGILAQWMLYHHRQNPLFTRFDDICEIFKRYDCSFSLGDSLRPGCQHDASDAAQLAELKTLGELTKRAWAHDVQVMVEGPGHVPMDQIEFNVRKQMEECNEAPFYVLGPLVTDIAPGYDHITSAIGAAMAGWYGTAMLCYVTPKEHLGLPNPEDVREGLIAYKIAAHAADIARHRPGARDRDDELSRARYNFDWNKQFELSLDPERAKQYHDETLPADIYKQAEFCSMCGPKHCPMQTKITDEDLEGLEKSLKSKGKAELPA.

Substrate-binding positions include Asn-80, Met-109, Tyr-139, His-175, 195–197, 236–239, and Glu-275; these read SRG and DSLR. His-279 contributes to the Zn(2+) binding site. Substrate is bound at residue Tyr-302. His-343 contacts Zn(2+). 3 residues coordinate [4Fe-4S] cluster: Cys-423, Cys-426, and Cys-431.

Belongs to the ThiC family. It depends on [4Fe-4S] cluster as a cofactor.

The catalysed reaction is 5-amino-1-(5-phospho-beta-D-ribosyl)imidazole + S-adenosyl-L-methionine = 4-amino-2-methyl-5-(phosphooxymethyl)pyrimidine + CO + 5'-deoxyadenosine + formate + L-methionine + 3 H(+). It participates in cofactor biosynthesis; thiamine diphosphate biosynthesis. In terms of biological role, catalyzes the synthesis of the hydroxymethylpyrimidine phosphate (HMP-P) moiety of thiamine from aminoimidazole ribotide (AIR) in a radical S-adenosyl-L-methionine (SAM)-dependent reaction. This chain is Phosphomethylpyrimidine synthase, found in Prochlorococcus marinus (strain MIT 9303).